The sequence spans 103 residues: Large ribosomal subunit protein uL24 (103 aa).

The protein belongs to the universal ribosomal protein uL24 family. In terms of assembly, part of the 50S ribosomal subunit.

One of two assembly initiator proteins, it binds directly to the 5'-end of the 23S rRNA, where it nucleates assembly of the 50S subunit. Its function is as follows. One of the proteins that surrounds the polypeptide exit tunnel on the outside of the subunit. This chain is Large ribosomal subunit protein uL24, found in Listeria innocua serovar 6a (strain ATCC BAA-680 / CLIP 11262).